Reading from the N-terminus, the 203-residue chain is ATP-dependent Clp protease proteolytic subunit (203 aa).

The Nucleophile role is filled by serine 107. Histidine 132 is an active-site residue.

This sequence belongs to the peptidase S14 family. Fourteen ClpP subunits assemble into 2 heptameric rings which stack back to back to give a disk-like structure with a central cavity, resembling the structure of eukaryotic proteasomes.

The protein localises to the cytoplasm. It catalyses the reaction Hydrolysis of proteins to small peptides in the presence of ATP and magnesium. alpha-casein is the usual test substrate. In the absence of ATP, only oligopeptides shorter than five residues are hydrolyzed (such as succinyl-Leu-Tyr-|-NHMec, and Leu-Tyr-Leu-|-Tyr-Trp, in which cleavage of the -Tyr-|-Leu- and -Tyr-|-Trp bonds also occurs).. In terms of biological role, cleaves peptides in various proteins in a process that requires ATP hydrolysis. Has a chymotrypsin-like activity. Plays a major role in the degradation of misfolded proteins. The chain is ATP-dependent Clp protease proteolytic subunit from Shewanella loihica (strain ATCC BAA-1088 / PV-4).